The following is a 504-amino-acid chain: uncharacterized protein (504 aa).

The helical transmembrane segment at 26 to 46 threads the bilayer; sequence ILFLLLGLIILVNISINVTTV. Polar residues predominate over residues 103–112; sequence PTQCSSSSTH. Disordered stretches follow at residues 103 to 180, 313 to 402, and 431 to 504; these read PTQC…TRPM, YDAR…PLTT, and QRLA…GKLN. A compositionally biased stretch (basic residues) spans 113-128; sequence YFRKHSNDRRSRRRYC. Polar residues predominate over residues 135–147; the sequence is QIRQSNQQQSCHS. A compositionally biased stretch (basic and acidic residues) spans 313–324; it reads YDARDQWRRGTE. Over residues 349–377 the composition is skewed to polar residues; that stretch reads SSQAHRQNFPSYTHSQPNHSPPQSVGYSS. 2 stretches are compositionally biased toward basic and acidic residues: residues 378-389 and 467-478; these read RESHEVRRRAPD and LELKRQVQENRG. The segment covering 494–504 has biased composition (basic residues); the sequence is SLHRSRTGKLN.

The protein resides in the membrane. This is an uncharacterized protein from Rattus norvegicus (Rat).